Here is a 427-residue protein sequence, read N- to C-terminus: Enolase (427 aa).

Gln-162 contacts (2R)-2-phosphoglycerate. Residue Glu-204 is the Proton donor of the active site. 3 residues coordinate Mg(2+): Asp-241, Glu-284, and Asp-311. 4 residues coordinate (2R)-2-phosphoglycerate: Lys-336, Arg-365, Ser-366, and Lys-387. The active-site Proton acceptor is Lys-336.

This sequence belongs to the enolase family. It depends on Mg(2+) as a cofactor.

The protein localises to the cytoplasm. It is found in the secreted. The protein resides in the cell surface. It catalyses the reaction (2R)-2-phosphoglycerate = phosphoenolpyruvate + H2O. It functions in the pathway carbohydrate degradation; glycolysis; pyruvate from D-glyceraldehyde 3-phosphate: step 4/5. Functionally, catalyzes the reversible conversion of 2-phosphoglycerate (2-PG) into phosphoenolpyruvate (PEP). It is essential for the degradation of carbohydrates via glycolysis. The protein is Enolase of Corynebacterium kroppenstedtii (strain DSM 44385 / JCM 11950 / CIP 105744 / CCUG 35717).